The chain runs to 787 residues: DNA ligase (787 aa).

NAD(+) contacts are provided by residues 32-36 (DVEYD), 81-82 (SL), and Glu-121. The active-site N6-AMP-lysine intermediate is Lys-123. NAD(+) contacts are provided by Arg-144, Glu-181, Lys-297, and Lys-321. Cys-415, Cys-418, Cys-445, and Cys-451 together coordinate Zn(2+). The 85-residue stretch at 703–787 (VEGLPLAGQT…RLTELGVAVD (85 aa)) folds into the BRCT domain.

The protein belongs to the NAD-dependent DNA ligase family. LigA subfamily. It depends on Mg(2+) as a cofactor. Requires Mn(2+) as cofactor.

It carries out the reaction NAD(+) + (deoxyribonucleotide)n-3'-hydroxyl + 5'-phospho-(deoxyribonucleotide)m = (deoxyribonucleotide)n+m + AMP + beta-nicotinamide D-nucleotide.. Functionally, DNA ligase that catalyzes the formation of phosphodiester linkages between 5'-phosphoryl and 3'-hydroxyl groups in double-stranded DNA using NAD as a coenzyme and as the energy source for the reaction. It is essential for DNA replication and repair of damaged DNA. The polypeptide is DNA ligase (Pseudomonas savastanoi pv. phaseolicola (strain 1448A / Race 6) (Pseudomonas syringae pv. phaseolicola (strain 1448A / Race 6))).